The chain runs to 327 residues: Probable cell division protein WhiA (327 aa).

A DNA-binding region (H-T-H motif) is located at residues 275 to 308 (SLEELGRLADPPMTKDAVAGRIRRLLSMADRKAK). Residues 304–327 (DRKAKQDGIPDTESAVTPDLLEDA) are disordered.

The protein belongs to the WhiA family.

In terms of biological role, involved in cell division and chromosome segregation. The chain is Probable cell division protein WhiA from Mycobacterium sp. (strain MCS).